Reading from the N-terminus, the 280-residue chain is Putative pyruvate, phosphate dikinase regulatory protein (280 aa).

Residue 156-163 (GVSRTSKT) coordinates ADP.

It belongs to the pyruvate, phosphate/water dikinase regulatory protein family. PDRP subfamily.

It catalyses the reaction N(tele)-phospho-L-histidyl/L-threonyl-[pyruvate, phosphate dikinase] + ADP = N(tele)-phospho-L-histidyl/O-phospho-L-threonyl-[pyruvate, phosphate dikinase] + AMP + H(+). It carries out the reaction N(tele)-phospho-L-histidyl/O-phospho-L-threonyl-[pyruvate, phosphate dikinase] + phosphate + H(+) = N(tele)-phospho-L-histidyl/L-threonyl-[pyruvate, phosphate dikinase] + diphosphate. In terms of biological role, bifunctional serine/threonine kinase and phosphorylase involved in the regulation of the pyruvate, phosphate dikinase (PPDK) by catalyzing its phosphorylation/dephosphorylation. In Hyphomonas neptunium (strain ATCC 15444), this protein is Putative pyruvate, phosphate dikinase regulatory protein.